The primary structure comprises 231 residues: Phosphatidylserine decarboxylase proenzyme (231 aa).

Ser-188 acts as the Schiff-base intermediate with substrate; via pyruvic acid in catalysis. Pyruvic acid (Ser); by autocatalysis is present on Ser-188.

Belongs to the phosphatidylserine decarboxylase family. PSD-A subfamily. Heterodimer of a large membrane-associated beta subunit and a small pyruvoyl-containing alpha subunit. Pyruvate serves as cofactor. Is synthesized initially as an inactive proenzyme. Formation of the active enzyme involves a self-maturation process in which the active site pyruvoyl group is generated from an internal serine residue via an autocatalytic post-translational modification. Two non-identical subunits are generated from the proenzyme in this reaction, and the pyruvate is formed at the N-terminus of the alpha chain, which is derived from the carboxyl end of the proenzyme. The post-translation cleavage follows an unusual pathway, termed non-hydrolytic serinolysis, in which the side chain hydroxyl group of the serine supplies its oxygen atom to form the C-terminus of the beta chain, while the remainder of the serine residue undergoes an oxidative deamination to produce ammonia and the pyruvoyl prosthetic group on the alpha chain.

The protein resides in the cell membrane. It catalyses the reaction a 1,2-diacyl-sn-glycero-3-phospho-L-serine + H(+) = a 1,2-diacyl-sn-glycero-3-phosphoethanolamine + CO2. It participates in phospholipid metabolism; phosphatidylethanolamine biosynthesis; phosphatidylethanolamine from CDP-diacylglycerol: step 2/2. Catalyzes the formation of phosphatidylethanolamine (PtdEtn) from phosphatidylserine (PtdSer). In Rickettsia africae (strain ESF-5), this protein is Phosphatidylserine decarboxylase proenzyme.